The chain runs to 385 residues: 1-deoxy-D-xylulose 5-phosphate reductoisomerase 1 (385 aa).

6 residues coordinate NADPH: Thr-11, Gly-12, Ser-13, Ile-14, Asn-39, and Asn-122. Residue Lys-123 participates in 1-deoxy-D-xylulose 5-phosphate binding. Glu-124 contributes to the NADPH binding site. Asp-148 is a Mn(2+) binding site. Ser-149, Glu-150, Ser-174, and His-197 together coordinate 1-deoxy-D-xylulose 5-phosphate. A Mn(2+)-binding site is contributed by Glu-150. Position 203 (Gly-203) interacts with NADPH. 1-deoxy-D-xylulose 5-phosphate-binding residues include Ser-210, Asn-215, Lys-216, and Glu-219. Glu-219 is a binding site for Mn(2+).

Belongs to the DXR family. Mg(2+) serves as cofactor. Requires Mn(2+) as cofactor.

It carries out the reaction 2-C-methyl-D-erythritol 4-phosphate + NADP(+) = 1-deoxy-D-xylulose 5-phosphate + NADPH + H(+). The protein operates within isoprenoid biosynthesis; isopentenyl diphosphate biosynthesis via DXP pathway; isopentenyl diphosphate from 1-deoxy-D-xylulose 5-phosphate: step 1/6. Functionally, catalyzes the NADPH-dependent rearrangement and reduction of 1-deoxy-D-xylulose-5-phosphate (DXP) to 2-C-methyl-D-erythritol 4-phosphate (MEP). This is 1-deoxy-D-xylulose 5-phosphate reductoisomerase 1 from Bacillus cereus (strain ATCC 14579 / DSM 31 / CCUG 7414 / JCM 2152 / NBRC 15305 / NCIMB 9373 / NCTC 2599 / NRRL B-3711).